A 251-amino-acid chain; its full sequence is Triosephosphate isomerase (251 aa).

9-11 (NWK) lines the substrate pocket. His-95 functions as the Electrophile in the catalytic mechanism. The active-site Proton acceptor is Glu-167. Residues Gly-173, Ser-213, and 234–235 (GG) contribute to the substrate site. Ser-213 is subject to Phosphoserine.

It belongs to the triosephosphate isomerase family. In terms of assembly, homodimer.

The protein resides in the cytoplasm. It catalyses the reaction D-glyceraldehyde 3-phosphate = dihydroxyacetone phosphate. Its pathway is carbohydrate biosynthesis; gluconeogenesis. The protein operates within carbohydrate degradation; glycolysis; D-glyceraldehyde 3-phosphate from glycerone phosphate: step 1/1. In terms of biological role, involved in the gluconeogenesis. Catalyzes stereospecifically the conversion of dihydroxyacetone phosphate (DHAP) to D-glyceraldehyde-3-phosphate (G3P). This is Triosephosphate isomerase from Priestia megaterium (strain DSM 319 / IMG 1521) (Bacillus megaterium).